Reading from the N-terminus, the 322-residue chain is GRB2-related adaptor protein 2 (322 aa).

One can recognise an SH3 1 domain in the interval 1–56 (MEATAKFDFMASGEDELSFRTGDILKILSNQEEWLKAELGSQEGYVPKNFIDIEFP). Y45 bears the Phosphotyrosine mark. In terms of domain architecture, SH2 spans 58-149 (WFHEGLSRHQ…QKQVFLRDGT (92 aa)). At K106 the chain carries N6-acetyllysine. Positions 143–216 (VFLRDGTQDQ…TPGPQPPQQQ (74 aa)) are disordered. The span at 148 to 163 (GTQDQGHRGNSLDRRS) shows a compositional bias: basic and acidic residues. The residue at position 186 (S186) is a Phosphoserine. Residues 193–204 (PQQFHPHQQPSP) show a composition bias toward low complexity. S230 carries the phosphoserine modification. A Phosphothreonine modification is found at T254. One can recognise an SH3 2 domain in the interval 263–322 (GRVRWARALYDFEALEEDELGFRSGEVVEVLDSSNPSWWTGRLHNKLGLFPANYVAPMMR).

It belongs to the GRB2/sem-5/DRK family. Interacts with phosphorylated LAT and LAX1 upon TCR activation. Interacts with SHB. Interacts with PTPN23. Interacts with phosphorylated LIME1 upon TCR activation.

It localises to the nucleus. The protein resides in the cytoplasm. Its subcellular location is the endosome. Its function is as follows. Interacts with SLP-76 to regulate NF-AT activation. Binds to tyrosine-phosphorylated shc. The chain is GRB2-related adaptor protein 2 (Grap2) from Mus musculus (Mouse).